The sequence spans 899 residues: UPF0182 protein Mhun_1303 (899 aa).

The next 7 helical transmembrane spans lie at 6–26 (LLIF…DLLS), 39–59 (VFLT…LLFF), 93–113 (VAAG…LAFL), 136–156 (LPFY…TLII), 196–216 (FLPQ…AFLW), 240–260 (ITIP…LLFL), and 271–291 (IAYG…AGFL).

It belongs to the UPF0182 family.

Its subcellular location is the cell membrane. The polypeptide is UPF0182 protein Mhun_1303 (Methanospirillum hungatei JF-1 (strain ATCC 27890 / DSM 864 / NBRC 100397 / JF-1)).